The following is a 231-amino-acid chain: Eukaryotic translation initiation factor 4E allele A (231 aa).

Basic and acidic residues predominate over residues 1-20; that stretch reads MAAAEMERTTSFDAAEKLKA. The interval 1–36 is disordered; the sequence is MAAAEMERTTSFDAAEKLKAADAGGGEVDDELEEGE. Residues 27–36 are compositionally biased toward acidic residues; sequence EVDDELEEGE. 2 EIF4G-binding regions span residues 56–59 and 66–102; these read HPLE and FDSP…NNIH. MRNA contacts are provided by residues 74–79, lysine 106, and 124–125; these read RQTAWG and WE. Cysteine 129 and cysteine 167 form a disulfide bridge. An EIF4G-binding region spans residues 150-159; the sequence is YTLLAMIGHQ. Residues 174-179 and 219-223 each bind mRNA; these read RSKGEK and KRLDR.

This sequence belongs to the eukaryotic initiation factor 4E family. In terms of assembly, EIF4F is a multi-subunit complex, the composition of which varies with external and internal environmental conditions. It is composed of at least EIF4A, EIF4E and EIF4G. EIF4E is also known to interact with other partners. In higher plants two isoforms of EIF4F have been identified, named isoform EIF4F and isoform EIF(iso)4F. Isoform EIF4F has subunits p220 and p26, whereas isoform EIF(iso)4F has subunits p82 and p28. (Microbial infection) Interacts with viral genome-linked protein (VPg); this interaction is possible in susceptible hosts but impaired in resistant plants. Post-translationally, according to the redox status, the Cys-129-Cys-167 disulfide bridge may have a role in regulating protein function by affecting its ability to bind capped mRNA.

Its subcellular location is the nucleus. It localises to the cytoplasm. Functionally, component of the protein complex eIF4F, which is involved in the recognition of the mRNA cap, ATP-dependent unwinding of 5'-terminal secondary structure and recruitment of mRNA to the ribosome. Recognizes and binds the 7-methylguanosine-containing mRNA cap during an early step in the initiation of protein synthesis and facilitates ribosome binding by inducing the unwinding of the mRNAs secondary structures. Key component of recessive resistance to potyviruses. Its function is as follows. (Microbial infection) Susceptibility host factor required for viral infection (e.g. Potato virus Y (PVY)) by recruiting viral RNAs to the host ribosomal complex via an interaction with viral genome-linked protein (VPg). In Solanum tuberosum (Potato), this protein is Eukaryotic translation initiation factor 4E allele A.